The following is a 36-amino-acid chain: MTDFSLPSILVPLVGLVLPAIAMASLSLHVQKNKIV.

A helical transmembrane segment spans residues 4 to 24 (FSLPSILVPLVGLVLPAIAMA).

The protein belongs to the PsaI family.

The protein resides in the plastid. It localises to the chloroplast thylakoid membrane. Its function is as follows. May help in the organization of the PsaL subunit. In Piper cenocladum (Ant piper), this protein is Photosystem I reaction center subunit VIII.